The chain runs to 136 residues: Small ribosomal subunit protein uS9 (136 aa).

The segment at 97-136 is disordered; the sequence is SPDNRKPLKTEGHLSRDPRAKERRKYGLKKARKAPQFSKR. Positions 98 to 116 are enriched in basic and acidic residues; sequence PDNRKPLKTEGHLSRDPRA. A compositionally biased stretch (basic residues) spans 117–136; it reads KERRKYGLKKARKAPQFSKR.

This sequence belongs to the universal ribosomal protein uS9 family.

The sequence is that of Small ribosomal subunit protein uS9 from Prochlorococcus marinus (strain MIT 9301).